Here is a 475-residue protein sequence, read N- to C-terminus: Methylenomycin A resistance protein (475 aa).

A run of 14 helical transmembrane segments spans residues 28 to 48 (ITAL…VNVA), 65 to 85 (WIVD…GGLA), 93 to 113 (VYLW…LAPT), 123 to 143 (VQGA…VFSF), 152 to 172 (MLGL…TVGG), 173 to 193 (LMVS…IGAI), 212 to 232 (LAVP…FALI), 240 to 260 (TAGP…LLAL), 285 to 305 (LVGF…GLYF), 314 to 334 (FQAG…NIVY), 346 to 366 (LLTA…TITA), 371 to 391 (WVVA…SPGM), 416 to 436 (QIGS…TSDW), and 439 to 459 (GAAI…LSAW).

The protein belongs to the major facilitator superfamily.

The protein resides in the cell membrane. Its function is as follows. Resistance to the epoxide antibiotic methylenomycin A; probably by mediating its efflux. The polypeptide is Methylenomycin A resistance protein (mmr) (Streptomyces coelicolor (strain ATCC BAA-471 / A3(2) / M145)).